Consider the following 117-residue polypeptide: Prefoldin subunit beta (117 aa).

It belongs to the prefoldin subunit beta family. In terms of assembly, heterohexamer of two alpha and four beta subunits.

The protein localises to the cytoplasm. Molecular chaperone capable of stabilizing a range of proteins. Seems to fulfill an ATP-independent, HSP70-like function in archaeal de novo protein folding. The sequence is that of Prefoldin subunit beta (pfdB) from Methanosarcina acetivorans (strain ATCC 35395 / DSM 2834 / JCM 12185 / C2A).